The following is a 217-amino-acid chain: Phosphatidylserine decarboxylase proenzyme (217 aa).

The active-site Schiff-base intermediate with substrate; via pyruvic acid is the S187. S187 bears the Pyruvic acid (Ser); by autocatalysis mark.

The protein belongs to the phosphatidylserine decarboxylase family. PSD-A subfamily. Heterodimer of a large membrane-associated beta subunit and a small pyruvoyl-containing alpha subunit. The cofactor is pyruvate. Post-translationally, is synthesized initially as an inactive proenzyme. Formation of the active enzyme involves a self-maturation process in which the active site pyruvoyl group is generated from an internal serine residue via an autocatalytic post-translational modification. Two non-identical subunits are generated from the proenzyme in this reaction, and the pyruvate is formed at the N-terminus of the alpha chain, which is derived from the carboxyl end of the proenzyme. The post-translation cleavage follows an unusual pathway, termed non-hydrolytic serinolysis, in which the side chain hydroxyl group of the serine supplies its oxygen atom to form the C-terminus of the beta chain, while the remainder of the serine residue undergoes an oxidative deamination to produce ammonia and the pyruvoyl prosthetic group on the alpha chain.

It is found in the cell membrane. It catalyses the reaction a 1,2-diacyl-sn-glycero-3-phospho-L-serine + H(+) = a 1,2-diacyl-sn-glycero-3-phosphoethanolamine + CO2. It functions in the pathway phospholipid metabolism; phosphatidylethanolamine biosynthesis; phosphatidylethanolamine from CDP-diacylglycerol: step 2/2. Catalyzes the formation of phosphatidylethanolamine (PtdEtn) from phosphatidylserine (PtdSer). The protein is Phosphatidylserine decarboxylase proenzyme of Thermobifida fusca (strain YX).